The following is a 118-amino-acid chain: MTSYTFSRELRLLTPAQFKSVFSNPIKASSAEITLLAIPNIEQHPRLGLTVAKRFVKRANQRNRIKRVIRESFRLNQHDIPALDIVVLVRNGVMEMENADLNKLIEKLWRKLSRRYNG.

The protein belongs to the RnpA family. Consists of a catalytic RNA component (M1 or rnpB) and a protein subunit.

It catalyses the reaction Endonucleolytic cleavage of RNA, removing 5'-extranucleotides from tRNA precursor.. RNaseP catalyzes the removal of the 5'-leader sequence from pre-tRNA to produce the mature 5'-terminus. It can also cleave other RNA substrates such as 4.5S RNA. The protein component plays an auxiliary but essential role in vivo by binding to the 5'-leader sequence and broadening the substrate specificity of the ribozyme. The sequence is that of Ribonuclease P protein component from Shewanella denitrificans (strain OS217 / ATCC BAA-1090 / DSM 15013).